A 97-amino-acid chain; its full sequence is ESAT-6-like protein EsxG (97 aa).

This sequence belongs to the WXG100 family. CFP-10 subfamily. Forms a tight 1:1 complex with EsxH.

Its subcellular location is the secreted. This is ESAT-6-like protein EsxG from Mycolicibacterium smegmatis (strain ATCC 700084 / mc(2)155) (Mycobacterium smegmatis).